Consider the following 599-residue polypeptide: MNNDINSSVESLNSACNMQSDTDTVPLLENGQSASNQPSASSSRGQPQASPRQKMQRSQPVHIQPLRRLQEEDQQLRTSSLPAIPNPFPELAGGAPGSPPSVAPSSLPPPPSQPPAKHFPPGFQLAKLTRPGLWTKTTARFSKRQPKNQCQTDTANAVSRIPTSQMEKLRLRKDVKVFSEDGTSKVVEILTDMTARDLCQLLVYKSHCVDDNSWTLVEHHPQLGLERCLEDHEIVVQVESTMPSESKFLFRKNYAKYEFFKNPVNFFPDQMVTWCQQSNGGQAQLLQNFLNSSSCPEIQGFLQVKEVGRKSWKKLYVCLRRSGLYYSTKGTSKEPRHLQLLADLEESSIFYLIAGKKQYNAPNEHGMCIKPNKAKIEMKELRLLCAEDEQIRTCWMTAFRLLKYGMLLYQNYRIPQQRKGLAPPFNAPMRSVSENSLVAMDFSGQIGRVIDNPAEAQSAALEEGHAWRKRSTRMNILSSQSPLHPSTLNSVIHRTQHWFHGRISREESHRIIKQQGLVDGLFLLRDSQSNPKAFVLTLCHQQKIRNFQILPCEDDGQTFFTLDDGNTKFSDLIQLVDFYQLNKGVLPCKLKHHCIRVAL.

Residues 1-23 (MNNDINSSVESLNSACNMQSDTD) show a composition bias toward polar residues. Residues 1–122 (MNNDINSSVE…QPPAKHFPPG (122 aa)) form a disordered region. The span at 32–43 (QSASNQPSASSS) shows a compositional bias: low complexity. The span at 44–61 (RGQPQASPRQKMQRSQPV) shows a compositional bias: polar residues. A Phosphoserine modification is found at Ser50. Positions 97 to 118 (GSPPSVAPSSLPPPPSQPPAKH) are enriched in pro residues. Phosphoserine; by MTOR, MAPK1 and MAPK3 is present on Ser98. The Ras-associating domain maps to 171 to 255 (LRKDVKVFSE…SKFLFRKNYA (85 aa)). One can recognise a PH domain in the interval 295–404 (CPEIQGFLQV…WMTAFRLLKY (110 aa)). Position 433 is a phosphoserine; by MTOR and PKB/AKT1 (Ser433). Ser436 bears the Phosphoserine mark. At Ser481 the chain carries Phosphoserine; by MTOR, MAPK1 and MAPK3. The 97-residue stretch at 498–594 (WFHGRISREE…VLPCKLKHHC (97 aa)) folds into the SH2 domain.

The protein belongs to the GRB7/10/14 family. As to quaternary structure, interacts with ligand-activated tyrosine kinase receptors, including FGFR1, INSR, IGF1R, MET and PDGFRB in a phosphotyrosine-dependent manner through the SH2 domain. Poorly binds to the EGFR. Directly interacts with MAP3K14/NIK and is recruited to the EGFR-ERBB2 complex. Interacts with GIGYF1/PERQ1 and GIGYF2/TNRC15. When unphosphorylated, interacts with AKT1 and when phosphorylated with YWHAE/14-3-3 epsilon. Interacts with NEDD4. Interacts with LRP6, thus interfering with the binding of AXIN1 to LRP6. Binds relatively non-specifically to several phosphoinositides, including PI(5)P, PI(4,5)P2, PI(3,4)P2 and PI(3,4,5)P3, with modest affinities through the PH domain. Binds to activated NRAS. Phosphorylated on serine residues upon EGF, FGF and PDGF stimulation.

The protein localises to the cytoplasm. Phosphorylation by mTORC1 stabilizes and activates GRB10 constituting a feedback pathway by which mTORC1 inhibits INSR-dependent signaling. Adapter protein which modulates coupling of a number of cell surface receptor kinases with specific signaling pathways. Binds to, and suppress signals from, activated receptors tyrosine kinases, including the insulin (INSR) and insulin-like growth factor (IGF1R) receptors. The inhibitory effect can be achieved by 2 mechanisms: interference with the signaling pathway and increased receptor degradation. Delays and reduces AKT1 phosphorylation in response to insulin stimulation. Blocks association between INSR and IRS1 and IRS2 and prevents insulin-stimulated IRS1 and IRS2 tyrosine phosphorylation. Recruits NEDD4 to IGF1R, leading to IGF1R ubiquitination, increased internalization and degradation by both the proteasomal and lysosomal pathways. A similar role in the mediation of ubiquitination also has been suggested with INSR. Negatively regulates Wnt signaling by interacting with LRP6 intracellular portion and interfering with the binding of AXIN1 to LRP6. Positive regulator of the KDR/VEGFR-2 signaling pathway. May inhibit NEDD4-mediated degradation of KDR/VEGFR-2. The protein is Growth factor receptor-bound protein 10 (Grb10) of Rattus norvegicus (Rat).